The primary structure comprises 347 residues: Phenylalanine--tRNA ligase alpha subunit (347 aa).

Glu-265 lines the Mg(2+) pocket.

Belongs to the class-II aminoacyl-tRNA synthetase family. Phe-tRNA synthetase alpha subunit type 1 subfamily. Tetramer of two alpha and two beta subunits. Mg(2+) is required as a cofactor.

It localises to the cytoplasm. The catalysed reaction is tRNA(Phe) + L-phenylalanine + ATP = L-phenylalanyl-tRNA(Phe) + AMP + diphosphate + H(+). The protein is Phenylalanine--tRNA ligase alpha subunit of Mycolicibacterium paratuberculosis (strain ATCC BAA-968 / K-10) (Mycobacterium paratuberculosis).